The following is a 262-amino-acid chain: MRRTLYRLMIELTNGRFTSYTLRKFAQSRLSSIIIPSYAKVFQINQDEMEKGLKEYRTLHELFTRKLKEGKRSIDTDASSIVSPVDGVFADHGPIEDTKTFDIKGKRYSIVDMLGNEERAQRYAGGTYMVIYLSPSHYHRIHSPLSGSVTERFVLGRKSYPVNAAGMEYGKEPLSKNYRSVTEVNSDGEHMALVKVGAMFVNSIELLHERDTVQKGEEMAYFTFGSTVVLLFEKDMIEVVQELKSGQELRLGEKIATRLAHK.

Catalysis depends on charge relay system; for autoendoproteolytic cleavage activity residues aspartate 86, histidine 142, and serine 226. Serine 226 (schiff-base intermediate with substrate; via pyruvic acid; for decarboxylase activity) is an active-site residue. Pyruvic acid (Ser); by autocatalysis is present on serine 226.

This sequence belongs to the phosphatidylserine decarboxylase family. PSD-B subfamily. Prokaryotic type I sub-subfamily. Heterodimer of a large membrane-associated beta subunit and a small pyruvoyl-containing alpha subunit. Requires pyruvate as cofactor. In terms of processing, is synthesized initially as an inactive proenzyme. Formation of the active enzyme involves a self-maturation process in which the active site pyruvoyl group is generated from an internal serine residue via an autocatalytic post-translational modification. Two non-identical subunits are generated from the proenzyme in this reaction, and the pyruvate is formed at the N-terminus of the alpha chain, which is derived from the carboxyl end of the proenzyme. The autoendoproteolytic cleavage occurs by a canonical serine protease mechanism, in which the side chain hydroxyl group of the serine supplies its oxygen atom to form the C-terminus of the beta chain, while the remainder of the serine residue undergoes an oxidative deamination to produce ammonia and the pyruvoyl prosthetic group on the alpha chain. During this reaction, the Ser that is part of the protease active site of the proenzyme becomes the pyruvoyl prosthetic group, which constitutes an essential element of the active site of the mature decarboxylase.

It localises to the cell membrane. It carries out the reaction a 1,2-diacyl-sn-glycero-3-phospho-L-serine + H(+) = a 1,2-diacyl-sn-glycero-3-phosphoethanolamine + CO2. It functions in the pathway phospholipid metabolism; phosphatidylethanolamine biosynthesis; phosphatidylethanolamine from CDP-diacylglycerol: step 2/2. Its function is as follows. Catalyzes the formation of phosphatidylethanolamine (PtdEtn) from phosphatidylserine (PtdSer). The chain is Phosphatidylserine decarboxylase proenzyme from Bacillus anthracis.